The chain runs to 1148 residues: Putative transcription factor SEF1 (1148 aa).

The interval 1-51 is disordered; it reads MVKDNRDSDQDQDFSSAHMKRQPEQQQLQQHQFPSKKQRISHHDDSHQINH. Position 8 is a phosphoserine (Ser8). Positions 57–87 form a DNA-binding region, zn(2)-C6 fungal-type; it reads CTHCRQHKIKCDASQNFPHPCSRCEKIGLHC. The segment at 148–180 is disordered; the sequence is PTPGTIIPNPDSSPSSGSPTSSAAQRDSKVSVQ. Over residues 150-169 the composition is skewed to low complexity; it reads PGTIIPNPDSSPSSGSPTSS. A Phosphoserine modification is found at Ser263. The tract at residues 524–550 is disordered; sequence EESEEDNNDSIDNNNNDKRNKKDEPHV. A compositionally biased stretch (basic and acidic residues) spans 538 to 550; sequence NNDKRNKKDEPHV. Position 806 is a phosphoserine (Ser806). The span at 1029 to 1050 shows a compositional bias: polar residues; that stretch reads RSQSSMSHSRTPIASKSNNMTD. The segment at 1029–1063 is disordered; it reads RSQSSMSHSRTPIASKSNNMTDLHSVVSDPGSSKS.

The protein localises to the nucleus. In terms of biological role, putative transcription factor that seems to be involved in the sporulation process. Suppresses the lethal phenotype of RPM2 deletion. This chain is Putative transcription factor SEF1 (SEF1), found in Saccharomyces cerevisiae (strain ATCC 204508 / S288c) (Baker's yeast).